Reading from the N-terminus, the 80-residue chain is Iota-conotoxin-like r11c (80 aa).

A signal peptide spans 1–19 (MKLCLTFLLVLMILASVTG). A propeptide spanning residues 20-35 (EKSSKHTLSRAARVKN) is cleaved from the precursor. A 4-hydroxyproline; partial mark is found at P38 and P47. Disulfide bonds link C41–C55, C48–C58, C54–C63, and C57–C72. A 4-hydroxyproline modification is found at P65. Residue L78 is modified to D-leucine. R80 is a propeptide (removed by a carboxypeptidase).

The natural D-Leu form of the peptide is more potent than the synthetic L-Leu form. As to expression, expressed by the venom duct.

It localises to the secreted. In terms of biological role, iota-conotoxins bind to voltage-gated sodium channels (Nav) and act as agonists by shifting the voltage-dependence of activation to more hyperpolarized levels. Causes circular motion, convulsions, copious urination, rigid paralysis and death upon intracranial injection into mice. Causes unbalanced swimming, swimming in diagonal and vertical motion and death, when injected intraperitoneally into goldfish. L-Leu and D-Leu forms are active on both nerve and muscle. This Conus radiatus (Rayed cone) protein is Iota-conotoxin-like r11c.